The following is a 98-amino-acid chain: Small ribosomal subunit protein uS19 (98 aa).

The protein belongs to the universal ribosomal protein uS19 family.

Functionally, protein S19 forms a complex with S13 that binds strongly to the 16S ribosomal RNA. This Chlorobaculum parvum (strain DSM 263 / NCIMB 8327) (Chlorobium vibrioforme subsp. thiosulfatophilum) protein is Small ribosomal subunit protein uS19.